The sequence spans 68 residues: MKRLELRAKQIRQMSKEERQETLKNLKESLLHERALISMGGSSPSPGKVRGIRRQIARLLTVEREEKR.

Belongs to the universal ribosomal protein uL29 family.

The sequence is that of Large ribosomal subunit protein uL29 (rpl29) from Thermoplasma acidophilum (strain ATCC 25905 / DSM 1728 / JCM 9062 / NBRC 15155 / AMRC-C165).